A 1117-amino-acid polypeptide reads, in one-letter code: MLAGRPGTRSAVGELGTESSDNLDRAPLGPRESGGHHRPGSYLDMKIHLEKNLEEERQILLQQQKICRNRARKYFVESNRRKKAFEEKRKEQEEKEHQIREQILQQRKQKFEEVTEKFQRAHVPLSQRRKAVSRKPVPPLEEALKQIQESNLKSEVNLPFSRRPTINWRAIDSALPSALSKNDHKHQKQLLSKINCEKEMNENMRATLATSKNVFQLKLEETQKLLEDQHLSNLQKFCDEVNQITNSETLSSIDSLEATEHEEIYLTLNKEHSTSIQRNTISLKPANMQSTNLSCFDEDKLAFSKTQHINNWLTNLDASNTQNVTAFSDILSKSNVLPSWEYFNSKEQNPSPLNGTVERATNTANNSVPFVSSPPMFVLDKKCEKTSETSTMRTTDSTSGAFKRERPLVTESPTFKFSKSQSTSDSLTQEVATFPDQEKYSELNQENGTTSIPTSCVPVATPLVLPSNIQSARPSAKNSIHIKEIDAVQCSDKLDELKDGKEEEIKYFNCNKEELPLFSDSFQDAYIPHNPDSKDEKQKLAETSSLSNVTSNYDFVGQHKKMKYNIHERNGVRFLKSILKKESKYEHGYLKALIINQSFKFGNQKAAAIRDSIELTKEKGAEIPKTIKKLRWFDETSNIENNAENSHSLKNKTGTTQQHSQQFHIQSGAGSNIISVSTCAVNSADTKKSREDSISENVTTLGGSGADHMPLNCFIPSGYNFAKHAWPASKKEESKIPVHDDSKTKQGKPQRGRAKIIRKPGSAKVQSGFICTNRKGAVIQPQSASKVNIFTQAQGKLIIPCPPPQSTSNIRSGKNIQVSQCQPVTPENPQNIITHNSFNSKHVLPTEHSLNQWNQESSSPLSNACSDLVTVIPSLPSYCSSECQTFAKINHSNGTQAVARQDATLYCTQRSPVCEESYPSVTLRTAEEESVPLWKRGPNVLHQNKRATGSTVMRRKRIAETKRRNILEQKRQNPGSVGQKYSEQINNFGQSVLLSSSEPKQTTRGTSYIEEVSDSTSEFLMAENLVKASVPEDEILTVLNSKQIQKSNLPLNKTQQFNICTLSAEEQKILESLNDLSERLHYIQESICKNPSIKNTLQIIPLLEKREDRTSSCRDKR.

The segment at 1–42 is disordered; the sequence is MLAGRPGTRSAVGELGTESSDNLDRAPLGPRESGGHHRPGSY. A coiled-coil region spans residues 49–121; sequence LEKNLEEERQ…EEVTEKFQRA (73 aa). Disordered stretches follow at residues 643-664 and 730-759; these read AENSHSLKNKTGTTQQHSQQFH and KKEESKIPVHDDSKTKQGKPQRGRAKIIRK. The segment covering 730–744 has biased composition (basic and acidic residues); sequence KKEESKIPVHDDSKT. Basic residues predominate over residues 745-758; the sequence is KQGKPQRGRAKIIR.

As to quaternary structure, interacts with DCTN1. As to expression, expressed in brain, lung, skeletal muscle, kidney, pancreas, testis and ovary.

Its subcellular location is the midbody. It is found in the cytoplasm. It localises to the cytoskeleton. The protein resides in the microtubule organizing center. The protein localises to the centrosome. Its subcellular location is the cilium basal body. Its function is as follows. Participates in cytokinesis. Necessary for microtubules and mitotic spindle organization. Involved in primary cilium formation. The chain is Centrosomal protein of 126 kDa from Homo sapiens (Human).